We begin with the raw amino-acid sequence, 215 residues long: ATP-dependent Clp protease proteolytic subunit (215 aa).

Catalysis depends on Ser111, which acts as the Nucleophile. The active site involves His136.

This sequence belongs to the peptidase S14 family. As to quaternary structure, fourteen ClpP subunits assemble into 2 heptameric rings which stack back to back to give a disk-like structure with a central cavity, resembling the structure of eukaryotic proteasomes.

It localises to the cytoplasm. The catalysed reaction is Hydrolysis of proteins to small peptides in the presence of ATP and magnesium. alpha-casein is the usual test substrate. In the absence of ATP, only oligopeptides shorter than five residues are hydrolyzed (such as succinyl-Leu-Tyr-|-NHMec, and Leu-Tyr-Leu-|-Tyr-Trp, in which cleavage of the -Tyr-|-Leu- and -Tyr-|-Trp bonds also occurs).. Functionally, cleaves peptides in various proteins in a process that requires ATP hydrolysis. Has a chymotrypsin-like activity. Plays a major role in the degradation of misfolded proteins. The sequence is that of ATP-dependent Clp protease proteolytic subunit from Hamiltonella defensa subsp. Acyrthosiphon pisum (strain 5AT).